A 690-amino-acid polypeptide reads, in one-letter code: Elongation factor G (690 aa).

One can recognise a tr-type G domain in the interval 8 to 283; that stretch reads SRCRNIGIMA…AVVDFLPSPS (276 aa). Residues 17-24, 81-85, and 135-138 each bind GTP; these read AHIDAGKT, DTPGH, and NKMD.

It belongs to the TRAFAC class translation factor GTPase superfamily. Classic translation factor GTPase family. EF-G/EF-2 subfamily.

It localises to the cytoplasm. Catalyzes the GTP-dependent ribosomal translocation step during translation elongation. During this step, the ribosome changes from the pre-translocational (PRE) to the post-translocational (POST) state as the newly formed A-site-bound peptidyl-tRNA and P-site-bound deacylated tRNA move to the P and E sites, respectively. Catalyzes the coordinated movement of the two tRNA molecules, the mRNA and conformational changes in the ribosome. This Anaplasma marginale (strain Florida) protein is Elongation factor G.